Here is a 253-residue protein sequence, read N- to C-terminus: Imidazole glycerol phosphate synthase subunit HisF (253 aa).

Catalysis depends on residues aspartate 11 and aspartate 130.

The protein belongs to the HisA/HisF family. As to quaternary structure, heterodimer of HisH and HisF.

The protein resides in the cytoplasm. The catalysed reaction is 5-[(5-phospho-1-deoxy-D-ribulos-1-ylimino)methylamino]-1-(5-phospho-beta-D-ribosyl)imidazole-4-carboxamide + L-glutamine = D-erythro-1-(imidazol-4-yl)glycerol 3-phosphate + 5-amino-1-(5-phospho-beta-D-ribosyl)imidazole-4-carboxamide + L-glutamate + H(+). It functions in the pathway amino-acid biosynthesis; L-histidine biosynthesis; L-histidine from 5-phospho-alpha-D-ribose 1-diphosphate: step 5/9. In terms of biological role, IGPS catalyzes the conversion of PRFAR and glutamine to IGP, AICAR and glutamate. The HisF subunit catalyzes the cyclization activity that produces IGP and AICAR from PRFAR using the ammonia provided by the HisH subunit. This Clostridium botulinum (strain Okra / Type B1) protein is Imidazole glycerol phosphate synthase subunit HisF.